A 465-amino-acid chain; its full sequence is UDP-N-acetylmuramate--L-alanine ligase (465 aa).

112 to 118 (GTHGKTT) is an ATP binding site.

This sequence belongs to the MurCDEF family.

It localises to the cytoplasm. The catalysed reaction is UDP-N-acetyl-alpha-D-muramate + L-alanine + ATP = UDP-N-acetyl-alpha-D-muramoyl-L-alanine + ADP + phosphate + H(+). It functions in the pathway cell wall biogenesis; peptidoglycan biosynthesis. Its function is as follows. Cell wall formation. The chain is UDP-N-acetylmuramate--L-alanine ligase from Burkholderia orbicola (strain MC0-3).